Consider the following 485-residue polypeptide: Hexokinase-1 (485 aa).

In terms of domain architecture, Hexokinase spans 21 to 468 (KELMDEIHQL…SGAGAAVIAA (448 aa)). The interval 75-209 (TGKESGNYLA…ELPIEIVALI (135 aa)) is hexokinase small subdomain. ATP-binding positions include 86–91 (DLGGTN) and K111. Substrate contacts are provided by residues S158, 175 to 176 (TK), 210 to 211 (ND), and N237. Residues 210-457 (NDTVGTLIAS…DPITIVPAED (248 aa)) form a hexokinase large subdomain region. Residue S245 is modified to Phosphoserine. E269 lines the substrate pocket. S272 is modified (phosphoserine). A substrate-binding site is contributed by E302. Residues 307-308 (GY), 344-348 (TSYPA), and 419-423 (SVYNK) each bind ATP.

This sequence belongs to the hexokinase family. In terms of assembly, homodimer.

The catalysed reaction is a D-hexose + ATP = a D-hexose 6-phosphate + ADP + H(+). It carries out the reaction D-fructose + ATP = D-fructose 6-phosphate + ADP + H(+). The enzyme catalyses D-glucose + ATP = D-glucose 6-phosphate + ADP + H(+). The protein operates within carbohydrate metabolism; hexose metabolism. It participates in carbohydrate degradation; glycolysis; D-glyceraldehyde 3-phosphate and glycerone phosphate from D-glucose: step 1/4. Its activity is regulated as follows. Subject to allosteric control. Substrate inhibition by ATP. Catalyzes the phosphorylation of hexose, such as D-glucose and D-fructose, to hexose 6-phosphate (D-glucose 6-phosphate and D-fructose 6-phosphate, respectively). Mediates the initial step of glycolysis by catalyzing phosphorylation of D-glucose to D-glucose 6-phosphate. This is Hexokinase-1 (HXK1) from Saccharomyces cerevisiae (strain ATCC 204508 / S288c) (Baker's yeast).